The sequence spans 207 residues: CASP-like protein F16 (207 aa).

Positions 1–30 are disordered; that stretch reads MEKSEKGNGVAPATRSPMALMGSSRNENQE. At 1–37 the chain is on the cytoplasmic side; it reads MEKSEKGNGVAPATRSPMALMGSSRNENQEVNTSMRT. A helical membrane pass occupies residues 38–58; sequence AETMLRLVPMALGVAALVVML. The Extracellular portion of the chain corresponds to 59–79; sequence KNSQSNDFGSVSYSDLGAFRY. The chain crosses the membrane as a helical span at residues 80–100; the sequence is LVHANGICAGYSLLSAIIAAV. Residues 101 to 108 are Cytoplasmic-facing; it reads PSPSTMPR. A helical transmembrane segment spans residues 109–129; it reads AWTFFLLDQILTYVILGAAAV. Topologically, residues 130-159 are extracellular; it reads STEVLYLANKGDSAITWSAACGTFAGFCHK. A helical transmembrane segment spans residues 160-180; that stretch reads ATIAVVITFVAVICYAVLSLV. Residues 181–207 lie on the Cytoplasmic side of the membrane; sequence SSYRLFTKFDAPVNYPSKTIEATVFHG.

The protein belongs to the Casparian strip membrane proteins (CASP) family. As to quaternary structure, homodimer and heterodimers.

It localises to the cell membrane. This is CASP-like protein F16 (F16) from Gossypium hirsutum (Upland cotton).